Reading from the N-terminus, the 783-residue chain is MTSIIKLTTLVGAQEESAVCYLLQVDEFRFLLDCGWDENFSMDIIDSVKKYVHQVDAVLLSHPDPLHLGALPYAVGKLGLNCAIYATIPVYKMGQMFMYDLYQSRHNTEDFSLFSLDDVDCAFDKIQQLKYNQIVHLKGKGHGLSITPLPAGHMIGGTIWKIVKDGEEEIVYAVDFNHKREIHLNGCSLEMINRPSLLITDSFNATYVQPRRKQRDEQLLTNVLETLRGDGNVLIAVDTAGRVLELAQLLDQIWRTKDAGLGVYSLALLNNVSYNVVEFSKSQVEWMSDKLMRCFEDKRNNPFQFRHLTLCHGYSDLARVPSPKVVLASQPDLECGFSRELFIQWCQDPKNSVILTYRTTPGTLARFLIDHPSERIIDIELRKRVKLEGKELEEYVEKEKLKKEAAKKLEQSKEADLDSSDDSDVEEDIDQITSHKAKHDLMMKNEGSRKGSFFKQAKKSYPMFPAPEDRIKWDEYGEIIKPEDFLVPELQVTEDEKTKLESGLTNGDEPMDQDLSDVPTKCVSTTESMEIKARVTYIDYEGRSDGDSIKKIINQMKPRQLIIVHGPPDATQDLAEACRAFGGKDIKVYTPKLHETVDATSETHIYQVRLKDSLVSSLKFCKAKDTELAWIDGVLDMRVSKVDTGVILEERELKDEGEDMEMQVDTQVMDASTIAQQKVIKSLFGDDDKEFSEESEIIPTLEPLPSNEVPGHQSVFMNEPRLSDFKQVLLREGIHAEFVGGVLVCNNMVAVRRTETGRIGLEGCLCEDFFKIRELLYEQYAIV.

Basic and acidic residues predominate over residues 407-416 (KKLEQSKEAD). The disordered stretch occupies residues 407-427 (KKLEQSKEADLDSSDDSDVEE). Positions 417–427 (LDSSDDSDVEE) are enriched in acidic residues.

This sequence belongs to the metallo-beta-lactamase superfamily. RNA-metabolizing metallo-beta-lactamase-like family. CPSF2/YSH1 subfamily. CPSF is a heterotetramer composed of four distinct subunits 160, 100, 70 and 30 kDa. Identification in a complex with cpsf2, cpsf73, cpsf160 and sympk. Interacts with sympk.

Its subcellular location is the nucleus. It is found in the cytoplasm. Functionally, CPSF plays a key role in pre-mRNA 3'-end formation, recognizing the AAUAAA signal sequence and interacting with poly(A) polymerase and other factors to bring about cleavage and poly(A) addition. In X.laevis this subunit seems to be predominantly involved in cytoplasmic polyadenylation reaction. May also be involved in the histone 3'-end pre-mRNA processing. The chain is Cleavage and polyadenylation specificity factor subunit 2 (cpsf2) from Xenopus laevis (African clawed frog).